The following is a 301-amino-acid chain: Large ribosomal subunit protein uL18z (301 aa).

The protein belongs to the universal ribosomal protein uL18 family. Component of the large ribosomal subunit (LSU). Expressed in seedlings, roots, stems, leaves, inflorescences and siliques.

It is found in the cytoplasm. It localises to the nucleus. The protein resides in the nucleolus. The protein localises to the nucleoplasm. In terms of biological role, component of the ribosome, a large ribonucleoprotein complex responsible for the synthesis of proteins in the cell. The small ribosomal subunit (SSU) binds messenger RNAs (mRNAs) and translates the encoded message by selecting cognate aminoacyl-transfer RNA (tRNA) molecules. The large subunit (LSU) contains the ribosomal catalytic site termed the peptidyl transferase center (PTC), which catalyzes the formation of peptide bonds, thereby polymerizing the amino acids delivered by tRNAs into a polypeptide chain. The nascent polypeptides leave the ribosome through a tunnel in the LSU and interact with protein factors that function in enzymatic processing, targeting, and the membrane insertion of nascent chains at the exit of the ribosomal tunnel. Seems involved in the regulation of cell proliferation. Essential in leaf polarity establishment, probably having a role for translation in leaf dorsoventral patterning to specify leaf adaxial identity. The polypeptide is Large ribosomal subunit protein uL18z (Arabidopsis thaliana (Mouse-ear cress)).